We begin with the raw amino-acid sequence, 236 residues long: RNA-binding protein 24 (236 aa).

In terms of domain architecture, RRM spans 11–88 (TKIFVGGLPY…RKANVNLAYL (78 aa)). A necessary for interaction with EIF4E region spans residues 175–199 (QYPYAASPAAAGYVTAGGYGYAVQQ).

In terms of assembly, interacts with EIF4E; this interaction prevents EIF4E from binding to p53/TP53 mRNA and inhibits the assembly of translation initiation complex. (Microbial infection) Interacts with HCV mature core protein; this interaction, which enhances the interaction of Core with 5'-UTR may favor viral replication over translation. As to quaternary structure, (Microbial infection) Interacts with HCV Serine protease/helicase NS3. In terms of tissue distribution, expressed in fetal and adult heart and skeletal muscles.

It localises to the nucleus. The protein resides in the cytoplasm. Its function is as follows. Multifunctional RNA-binding protein involved in the regulation of pre-mRNA splicing, mRNA stability and mRNA translation important for cell fate decision and differentiation. Plays a major role in pre-mRNA alternative splicing regulation. Mediates preferentially muscle-specific exon inclusion in numerous mRNAs important for striated cardiac and skeletal muscle cell differentiation. Binds to intronic splicing enhancer (ISE) composed of stretches of GU-rich motifs localized in flanking intron of exon that will be included by alternative splicing. Involved in embryonic stem cell (ESC) transition to cardiac cell differentiation by promoting pre-mRNA alternative splicing events of several pluripotency and/or differentiation genes. Plays a role in the regulation of mRNA stability. Binds to 3'-untranslated region (UTR) AU-rich elements in target transcripts, such as CDKN1A and MYOG, leading to maintain their stabilities. Involved in myogenic differentiation by regulating MYOG levels. Binds to multiple regions in the mRNA 3'-UTR of TP63 isoform 2, hence inducing its destabilization. Also promotes the destabilization of the CHRM2 mRNA via its binding to a region in the coding sequence. Plays a role in the regulation of mRNA translation. Mediates repression of p53/TP53 mRNA translation through its binding to U-rich element in the 3'-UTR, hence preventing EIF4E from binding to p53/TP53 mRNA and translation initiation. Binds to a huge amount of mRNAs. Required for embryonic heart development, sarcomer and M-band formation in striated muscles. Together with RBM20, promotes the expression of short isoforms of PDLIM5/ENH in cardiomyocytes. In terms of biological role, (Microbial infection) Promotes hepatitis C virus (HCV) replication over translation through the inhibition of viral protein expression. Decreases viral translation by linking viral 5'- and 3'-UTRs, blocking 80S ribosome assembly on the viral IRES and enhancing the interaction of the mature core protein and 5'-UTR. This chain is RNA-binding protein 24, found in Homo sapiens (Human).